Reading from the N-terminus, the 100-residue chain is Small ribosomal subunit protein uS14 (100 aa).

This sequence belongs to the universal ribosomal protein uS14 family. In terms of assembly, part of the 30S ribosomal subunit. Contacts proteins S3 and S10.

Binds 16S rRNA, required for the assembly of 30S particles and may also be responsible for determining the conformation of the 16S rRNA at the A site. The chain is Small ribosomal subunit protein uS14 from Picosynechococcus sp. (strain ATCC 27264 / PCC 7002 / PR-6) (Agmenellum quadruplicatum).